Here is a 156-residue protein sequence, read N- to C-terminus: MEPAAGSSMEPSADWLATAAARGRVEEVRALLEAGALPNAPNSYGRRPIQVMMMGSARVAELLLLHGAEPNCADPATLTRPVHDAAREGFLDTLVVLHRAGARLDVRDAWGRLPVDLAEELGHRDVARYLRAAAGGTRGSNHARIDAAEGPSDIPD.

Met1 bears the N-acetylmethionine mark. 2 positions are modified to phosphoserine: Ser7 and Ser8. ANK repeat units lie at residues 11–40, 44–72, 77–106, and 110–139; these read PSAD…LPNA, YGRR…EPNC, TLTR…RLDV, and WGRL…GTRG. A phosphoserine mark is found at Ser140 and Ser152.

Belongs to the CDKN2 cyclin-dependent kinase inhibitor family. In terms of assembly, heterodimer with CDK4 or CDK6. Predominant p16 complexes contained CDK6. Interacts with CDK4 (both 'T-172'-phosphorylated and non-phosphorylated forms); the interaction inhibits cyclin D-CDK4 kinase activity. Interacts with ISCO2. Post-translationally, phosphorylation seems to increase interaction with CDK4. In terms of tissue distribution, widely expressed but not detected in brain or skeletal muscle. Isoform 3 is pancreas-specific.

It localises to the cytoplasm. The protein localises to the nucleus. Acts as a negative regulator of the proliferation of normal cells by interacting strongly with CDK4 and CDK6. This inhibits their ability to interact with cyclins D and to phosphorylate the retinoblastoma protein. This is Cyclin-dependent kinase inhibitor 2A from Homo sapiens (Human).